Consider the following 364-residue polypeptide: Nucleoporin SEH1 (364 aa).

6 WD repeats span residues 10 to 49 (DHKDLIHDVSYDFHGRRMATCSSDQSVKVWDKGDDGEWHC), 55 to 96 (THSG…SNDK), 111 to 152 (DSRT…NLSQ), 160 to 210 (SCKL…RKYA), 217 to 258 (TVTD…RESA), and 276 to 315 (SHNSQVWRVSWNITSTLLASSGDDGCVRLWKANYMDNWKC).

Belongs to the WD repeat SEC13 family. As to quaternary structure, component of the Nup107-160 subcomplex of the nuclear pore complex (NPC). The Nup107-160 subcomplex includes NUP160, NUP133, NUP107, NUP98, NUP85, NUP43, NUP37, SEH1 and SEC13. Component of the GATOR2 subcomplex, composed of MIOS, SEC13, SEH1L, WDR24 and WDR59. The GATOR2 complex interacts with CASTOR1 and CASTOR2; the interaction is negatively regulated by arginine. The GATOR2 complex interacts with SESN1, SESN2 and SESN3; the interaction is negatively regulated by amino acids.

It is found in the chromosome. The protein resides in the centromere. Its subcellular location is the kinetochore. The protein localises to the nucleus. It localises to the nuclear pore complex. It is found in the lysosome membrane. With respect to regulation, the GATOR2 complex is negatively regulated by the upstream amino acid sensors CASTOR1 and SESN2, which sequester the GATOR2 complex in absence of amino acids. In the presence of abundant amino acids, GATOR2 is released from CASTOR1 and SESN2 and activated. Functionally, component of the Nup107-160 subcomplex of the nuclear pore complex (NPC). The Nup107-160 subcomplex is required for the assembly of a functional NPC. The Nup107-160 subcomplex is also required for normal kinetochore microtubule attachment, mitotic progression and chromosome segregation. This subunit plays a role in recruitment of the Nup107-160 subcomplex to the kinetochore. In terms of biological role, as a component of the GATOR2 complex, functions as an activator of the amino acid-sensing branch of the mTORC1 signaling pathway. The GATOR2 complex indirectly activates mTORC1 through the inhibition of the GATOR1 subcomplex. GATOR2 probably acts as an E3 ubiquitin-protein ligase toward GATOR1. In the presence of abundant amino acids, the GATOR2 complex mediates ubiquitination of the NPRL2 core component of the GATOR1 complex, leading to GATOR1 inactivation. In the absence of amino acids, GATOR2 is inhibited, activating the GATOR1 complex. The polypeptide is Nucleoporin SEH1 (seh1l) (Danio rerio (Zebrafish)).